The following is a 259-amino-acid chain: MLLKLAPAFTLLNSHGENLSPMLSTSSQGFVLKNFSTKSRNGLLVVCASKGSNTKPLTGVVFEPFEEVKKELMLVPTVPQVSLARHKYSDQCEAAVNEQINVEYNVSYVYHGMYAYFDRDNVALKGLARFFKESSEEERGHAEKLMEYQNKRGGKVKLQSILMPLSEFDHAEEGDALYAMELALSLAKLTNQKLLNLHAVATRNNDVQLADFVESKYLREQVEAIKMISEYVAQLRRVGKGHGVWHFDQMLLQEEEVVA.

Residues 1-52 constitute a chloroplast transit peptide; that stretch reads MLLKLAPAFTLLNSHGENLSPMLSTSSQGFVLKNFSTKSRNGLLVVCASKGS. The interval 53–85 is extension peptide (EP); sequence NTKPLTGVVFEPFEEVKKELMLVPTVPQVSLAR. The Ferritin-like diiron domain maps to 86–239; the sequence is HKYSDQCEAA…EYVAQLRRVG (154 aa). The Fe cation site is built by Glu-103, Glu-138, His-141, and Gln-221.

Belongs to the ferritin family. In terms of assembly, oligomer of 24 subunits. There are two types of subunits: L (light) chain and H (heavy) chain. The major chain can be light or heavy, depending on the species and tissue type. The functional molecule forms a roughly spherical shell with a diameter of 12 nm and contains a central cavity into which the insoluble mineral iron core is deposited.

It is found in the plastid. The protein localises to the chloroplast. The catalysed reaction is 4 Fe(2+) + O2 + 4 H(+) = 4 Fe(3+) + 2 H2O. Its function is as follows. Stores iron in a soluble, non-toxic, readily available form. Important for iron homeostasis. Has ferroxidase activity. Iron is taken up in the ferrous form and deposited as ferric hydroxides after oxidation. The protein is Ferritin-2, chloroplastic (FER2) of Nicotiana tabacum (Common tobacco).